The chain runs to 227 residues: UPF0173 metal-dependent hydrolase DR_0006 (227 aa).

The protein belongs to the UPF0173 family.

The protein is UPF0173 metal-dependent hydrolase DR_0006 of Deinococcus radiodurans (strain ATCC 13939 / DSM 20539 / JCM 16871 / CCUG 27074 / LMG 4051 / NBRC 15346 / NCIMB 9279 / VKM B-1422 / R1).